We begin with the raw amino-acid sequence, 498 residues long: XK-related protein 4 (498 aa).

The disordered stretch occupies residues 24–46 (SEHSGSVQGLHPGAQPDSAGAGD). A run of 2 helical transmembrane segments spans residues 81 to 101 (CLWI…DVWL) and 111 to 131 (YWWF…VQLF). A disordered region spans residues 166–203 (SHGDVTAQHHPATPQRQASTASRNTTTNSTASTGLGPR). Low complexity predominate over residues 183-198 (ASTASRNTTTNSTAST). Helical transmembrane passes span 302-322 (LFIY…LWYL) and 332-352 (FAVP…VFML).

The protein belongs to the XK family.

The protein localises to the cell membrane. The catalysed reaction is a 1,2-diacyl-sn-glycero-3-phospho-L-serine(in) = a 1,2-diacyl-sn-glycero-3-phospho-L-serine(out). Phospholipid scramblase that promotes phosphatidylserine exposure on apoptotic cell surface. Phosphatidylserine is a specific marker only present at the surface of apoptotic cells and acts as a specific signal for engulfment. The polypeptide is XK-related protein 4 (Tetraodon nigroviridis (Spotted green pufferfish)).